A 321-amino-acid chain; its full sequence is uncharacterized protein (321 aa).

The protein belongs to the carbohydrate kinase PfkB family.

This is an uncharacterized protein from Escherichia coli (strain K12).